The chain runs to 255 residues: NAD(P)H-quinone oxidoreductase subunit K, chloroplastic (255 aa).

Residues cysteine 47, cysteine 48, cysteine 112, and cysteine 143 each coordinate [4Fe-4S] cluster.

This sequence belongs to the complex I 20 kDa subunit family. In terms of assembly, NDH is composed of at least 16 different subunits, 5 of which are encoded in the nucleus. [4Fe-4S] cluster serves as cofactor.

The protein resides in the plastid. It localises to the chloroplast thylakoid membrane. The enzyme catalyses a plastoquinone + NADH + (n+1) H(+)(in) = a plastoquinol + NAD(+) + n H(+)(out). The catalysed reaction is a plastoquinone + NADPH + (n+1) H(+)(in) = a plastoquinol + NADP(+) + n H(+)(out). Functionally, NDH shuttles electrons from NAD(P)H:plastoquinone, via FMN and iron-sulfur (Fe-S) centers, to quinones in the photosynthetic chain and possibly in a chloroplast respiratory chain. The immediate electron acceptor for the enzyme in this species is believed to be plastoquinone. Couples the redox reaction to proton translocation, and thus conserves the redox energy in a proton gradient. The polypeptide is NAD(P)H-quinone oxidoreductase subunit K, chloroplastic (Zygnema circumcarinatum (Green alga)).